The primary structure comprises 274 residues: Bis(5'-nucleosyl)-tetraphosphatase, symmetrical (274 aa).

It belongs to the Ap4A hydrolase family.

The enzyme catalyses P(1),P(4)-bis(5'-adenosyl) tetraphosphate + H2O = 2 ADP + 2 H(+). Hydrolyzes diadenosine 5',5'''-P1,P4-tetraphosphate to yield ADP. The polypeptide is Bis(5'-nucleosyl)-tetraphosphatase, symmetrical (Erwinia tasmaniensis (strain DSM 17950 / CFBP 7177 / CIP 109463 / NCPPB 4357 / Et1/99)).